The sequence spans 37 residues: Large ribosomal subunit protein bL36 (37 aa).

The protein belongs to the bacterial ribosomal protein bL36 family.

The protein is Large ribosomal subunit protein bL36 (rpmJ) of Mycoplasmoides gallisepticum (strain R(low / passage 15 / clone 2)) (Mycoplasma gallisepticum).